The sequence spans 596 residues: Nitrite reductase (596 aa).

The signal sequence occupies residues 1-29; sequence MRQRTPFARPGLLASAALALVLGPLAASA. An N-terminal tail region spans residues 30-76; the sequence is QEQVAPPKDPAAALEDHKTRTDNRYEPSLDNLAQQDVAAPGAPEGVS. H46 contributes to the heme c binding site. Heme d1 contacts are provided by Y54 and S57. The 86-residue stretch at 77-162 folds into the Cytochrome c domain; that stretch reads ALSDAQYNEA…ANYLLLDPAA (86 aa). Heme c contacts are provided by C94, C97, H98, K108, and Y122. Residues W138, R203, H229, R232, R245, R272, Y292, R420, Q536, and T583 each coordinate heme d1. The segment at 163-596 is D1-heme domain; it reads PPEFGMKEMR…NVYNTMTDTY (434 aa).

Homodimer. Requires heme c as cofactor. Heme serves as cofactor.

The protein resides in the periplasm. The catalysed reaction is nitric oxide + Fe(III)-[cytochrome c] + H2O = Fe(II)-[cytochrome c] + nitrite + 2 H(+). It catalyses the reaction A + NH4(+) + H2O = hydroxylamine + AH2 + H(+). This Paracoccus pantotrophus (Thiosphaera pantotropha) protein is Nitrite reductase (nirS).